We begin with the raw amino-acid sequence, 396 residues long: 8-amino-7-oxononanoate synthase (396 aa).

Arginine 31 is a substrate binding site. Glycine 118–tyrosine 119 provides a ligand contact to pyridoxal 5'-phosphate. Histidine 143 lines the substrate pocket. Pyridoxal 5'-phosphate contacts are provided by serine 189, histidine 217, and threonine 245. Lysine 248 bears the N6-(pyridoxal phosphate)lysine mark. Threonine 362 is a substrate binding site.

This sequence belongs to the class-II pyridoxal-phosphate-dependent aminotransferase family. BioF subfamily. As to quaternary structure, homodimer. Pyridoxal 5'-phosphate serves as cofactor.

The catalysed reaction is 6-carboxyhexanoyl-[ACP] + L-alanine + H(+) = (8S)-8-amino-7-oxononanoate + holo-[ACP] + CO2. It functions in the pathway cofactor biosynthesis; biotin biosynthesis. Its function is as follows. Catalyzes the decarboxylative condensation of pimeloyl-[acyl-carrier protein] and L-alanine to produce 8-amino-7-oxononanoate (AON), [acyl-carrier protein], and carbon dioxide. The chain is 8-amino-7-oxononanoate synthase from Methylobacillus flagellatus (strain ATCC 51484 / DSM 6875 / VKM B-1610 / KT).